Consider the following 481-residue polypeptide: Glutamine synthetase (481 aa).

Residues 22–106 (NEVEFVDFRF…VFCDVYDVYK (85 aa)) form the GS beta-grasp domain. The region spanning 114–481 (PRSIAKKALK…PFEFITTYSC (368 aa)) is the GS catalytic domain. Glu139, Glu141, Glu223, and Glu230 together coordinate Mg(2+). L-glutamate-binding positions include 274 to 275 (NG) and Gly275. His279 is a Mg(2+) binding site. ATP is bound by residues 281–283 (HVS) and Ser283. Residues Arg331, Glu337, and Arg349 each coordinate L-glutamate. ATP-binding residues include Arg349 and Arg354. Glu367 serves as a coordination point for Mg(2+). Arg369 serves as a coordination point for L-glutamate.

Belongs to the glutamine synthetase family. As to quaternary structure, oligomer of 12 subunits arranged in the form of two hexameric ring. It depends on Mg(2+) as a cofactor.

It localises to the cytoplasm. It catalyses the reaction L-glutamate + NH4(+) + ATP = L-glutamine + ADP + phosphate + H(+). Its activity is regulated as follows. The activity of this enzyme could be controlled by adenylation under conditions of abundant glutamine. Functionally, catalyzes the ATP-dependent biosynthesis of glutamine from glutamate and ammonia. This Helicobacter pylori (strain J99 / ATCC 700824) (Campylobacter pylori J99) protein is Glutamine synthetase.